A 254-amino-acid chain; its full sequence is Tyrosine-protein phosphatase YwqE (254 aa).

This sequence belongs to the metallo-dependent hydrolases superfamily. CpsB/CapC family. Mn(2+) is required as a cofactor.

The catalysed reaction is O-phospho-L-tyrosyl-[protein] + H2O = L-tyrosyl-[protein] + phosphate. Its activity is regulated as follows. Inhibited by vanadate and sodium pyrophosphate. Not inhibited by sodium fluoride. Functionally, dephosphorylates the phosphotyrosine-containing proteins YwqD, YwqF and Ssb. The polypeptide is Tyrosine-protein phosphatase YwqE (ywqE) (Bacillus subtilis (strain 168)).